The following is a 391-amino-acid chain: Phosphoglycerate kinase (391 aa).

Residues 19–21, Arg-35, 58–61, Arg-117, and Arg-150 contribute to the substrate site; these read DYN and HMGR. ATP contacts are provided by residues Lys-201, Glu-323, and 349–352; that span reads GGDT.

It belongs to the phosphoglycerate kinase family. In terms of assembly, monomer.

It localises to the cytoplasm. It catalyses the reaction (2R)-3-phosphoglycerate + ATP = (2R)-3-phospho-glyceroyl phosphate + ADP. The protein operates within carbohydrate degradation; glycolysis; pyruvate from D-glyceraldehyde 3-phosphate: step 2/5. The polypeptide is Phosphoglycerate kinase (Desulforapulum autotrophicum (strain ATCC 43914 / DSM 3382 / VKM B-1955 / HRM2) (Desulfobacterium autotrophicum)).